A 429-amino-acid polypeptide reads, in one-letter code: Putative F-box/kelch-repeat protein At2g21680 (429 aa).

Positions 1–32 (MVLISETSDDGSTGGDHQIKKPKKEEDRNKKL) are disordered. Over residues 17–29 (HQIKKPKKEEDRN) the composition is skewed to basic and acidic residues. The 48-residue stretch at 37 to 84 (QVSLPIPEELILRCFLLVRRCHHPSLSLVCRSFHSLMSKLYDDRLRLG) folds into the F-box domain. Kelch repeat units lie at residues 144–175 (DIYV…RRGE), 176–221 (TSIR…VIDG), 222–267 (KIYV…LTYA), 269–313 (MKEK…VVDN), and 315–359 (LFCI…DGYK).

The protein is Putative F-box/kelch-repeat protein At2g21680 of Arabidopsis thaliana (Mouse-ear cress).